The following is a 545-amino-acid chain: Pentatricopeptide repeat-containing protein At4g18840 (545 aa).

PPR repeat units follow at residues 104–138 (NGFT…PVFP), 139–173 (DKYS…GLVT), 174–204 (DVFV…MPVR), 205–239 (DAVS…NVES), 240–266 (WNFM…MPVR), 267–301 (DVVS…STEK), 303–337 (DGFT…GIEI), 338–368 (EGFL…TSKR), 369–403 (DVST…GFKP), 404–434 (NGIT…MSSV), and 440–474 (TIEH…EASI). The tract at residues 475–545 (LLESLLGACK…ERVNRSLDVA (71 aa)) is type E motif.

This sequence belongs to the PPR family. PCMP-E subfamily.

This chain is Pentatricopeptide repeat-containing protein At4g18840 (PCMP-E101), found in Arabidopsis thaliana (Mouse-ear cress).